A 262-amino-acid polypeptide reads, in one-letter code: Cytochrome b mRNA maturase bI2 (262 aa).

The protein belongs to the LAGLIDADG endonuclease family.

The protein localises to the mitochondrion. In terms of biological role, this protein is responsible for splicing and maturation of cytochrome b mRNA. Specifically, it may be responsible for the splicing specificity of the second intron. This chain is Cytochrome b mRNA maturase bI2 (bI2), found in Debaryomyces hansenii (strain ATCC 36239 / CBS 767 / BCRC 21394 / JCM 1990 / NBRC 0083 / IGC 2968) (Yeast).